The sequence spans 75 residues: MKQDIHPKYTKVTVNCANCGNAFETRSTRNTIKVDICNNCHPFYTGKQMLVDTAGRVERFNKRFAKSTASQAKAQ.

It belongs to the bacterial ribosomal protein bL31 family. Type A subfamily. Part of the 50S ribosomal subunit.

Its function is as follows. Binds the 23S rRNA. This is Large ribosomal subunit protein bL31 from Chlorobium limicola (strain DSM 245 / NBRC 103803 / 6330).